Consider the following 418-residue polypeptide: Gamma-glutamyl phosphate reductase (418 aa).

This sequence belongs to the gamma-glutamyl phosphate reductase family.

Its subcellular location is the cytoplasm. It carries out the reaction L-glutamate 5-semialdehyde + phosphate + NADP(+) = L-glutamyl 5-phosphate + NADPH + H(+). It functions in the pathway amino-acid biosynthesis; L-proline biosynthesis; L-glutamate 5-semialdehyde from L-glutamate: step 2/2. Catalyzes the NADPH-dependent reduction of L-glutamate 5-phosphate into L-glutamate 5-semialdehyde and phosphate. The product spontaneously undergoes cyclization to form 1-pyrroline-5-carboxylate. This chain is Gamma-glutamyl phosphate reductase, found in Geotalea uraniireducens (strain Rf4) (Geobacter uraniireducens).